The primary structure comprises 643 residues: Melanoma-associated antigen C3 (643 aa).

MAGE domains follow at residues 184–384 and 456–643; these read LDEK…AAGM and LDEK…FCPE. The segment at 347–421 is disordered; that stretch reads NPQGLAGHRQ…PQSPLDSCSS (75 aa). A compositionally biased stretch (basic and acidic residues) spans 354 to 363; the sequence is HRQEDGRRGL. Residues 383 to 414 are compositionally biased toward pro residues; that stretch reads GMPPLPQSPPEIPPQGPPKISPQGPPQSPPQS. Phosphothreonine occurs at positions 478, 484, and 485.

In terms of tissue distribution, expressed in testis. Not expressed in other normal tissues, but is expressed in tumors of different histological origins.

This is Melanoma-associated antigen C3 (MAGEC3) from Homo sapiens (Human).